The chain runs to 1677 residues: ELMO domain-containing protein E (1677 aa).

Disordered stretches follow at residues 112–139 (TTTS…SSPS), 168–194 (NSKD…SNIK), 264–372 (QLHG…NTTE), 592–625 (DDDN…RSNS), 775–801 (PNSN…STNN), 888–947 (INKN…NQDI), 982–1002 (KIRS…SQPE), 1047–1075 (STNN…ETRS), 1122–1141 (KQKS…GNVS), 1197–1248 (NNNI…DNHA), 1261–1404 (DDDD…RKKR), 1434–1454 (SPGS…PQPE), 1467–1593 (KNPE…GDVS), and 1654–1677 (ESQR…SSSK). 2 stretches are compositionally biased toward low complexity: residues 115-139 (SSSS…SSPS) and 172-194 (TNNS…SNIK). Residues 269 to 278 (SIGGGGGGSG) are compositionally biased toward gly residues. Low complexity-rich tracts occupy residues 307-334 (SQSN…KPNN), 341-352 (TTTTTTTTTTTS), and 597-616 (NNNN…NNYN). An ELMO domain is found at 492–710 (SHQILLSDLW…HTREIIEKVC (219 aa)). Residues 891 to 903 (NGGGGGGGGGGGV) show a composition bias toward gly residues. Positions 922-933 (IDDSDDENDNDE) are enriched in acidic residues. 2 stretches are compositionally biased toward low complexity: residues 934–946 (VNNN…INQD) and 985–996 (SSSSTPDTSSPP). Residues 1186 to 1212 (LLDDVLDLNQTNNNIDNENDDINEAII) adopt a coiled-coil conformation. Positions 1228 to 1238 (EEEEEEEEEEE) are enriched in acidic residues. Over residues 1285-1305 (NNTTTTTTTTTTTTTTTTNTT) the composition is skewed to low complexity. Positions 1306-1334 (GQKRISILSTDTNRPGSSNYGESSLSNGS) are enriched in polar residues. Residues 1387–1397 (DDEDDEDDDDK) are compositionally biased toward acidic residues. Residues 1445–1454 (PHLSVSPQPE) show a composition bias toward polar residues. Composition is skewed to low complexity over residues 1475–1488 (LSSS…PLLS), 1503–1574 (SNLI…PSSS), and 1663–1677 (ASSS…SSSK).

The protein is ELMO domain-containing protein E (elmoE) of Dictyostelium discoideum (Social amoeba).